Here is a 255-residue protein sequence, read N- to C-terminus: Ribonuclease HII (255 aa).

Positions 72–255 constitute an RNase H type-2 domain; the sequence is QYIAGIDEAG…RSFAPVKAHE (184 aa). A divalent metal cation contacts are provided by Asp78, Glu79, and Asp170.

This sequence belongs to the RNase HII family. Mn(2+) serves as cofactor. Requires Mg(2+) as cofactor.

The protein resides in the cytoplasm. The catalysed reaction is Endonucleolytic cleavage to 5'-phosphomonoester.. Functionally, endonuclease that specifically degrades the RNA of RNA-DNA hybrids. The chain is Ribonuclease HII from Bacillus licheniformis (strain ATCC 14580 / DSM 13 / JCM 2505 / CCUG 7422 / NBRC 12200 / NCIMB 9375 / NCTC 10341 / NRRL NRS-1264 / Gibson 46).